Reading from the N-terminus, the 597-residue chain is Elongation factor 4 (597 aa).

A tr-type G domain is found at 2–184 (KNIRNFSIIA…EIVAKIPAPT (183 aa)). GTP contacts are provided by residues 14–19 (DHGKST) and 131–134 (NKID).

Belongs to the TRAFAC class translation factor GTPase superfamily. Classic translation factor GTPase family. LepA subfamily.

It is found in the cell inner membrane. The catalysed reaction is GTP + H2O = GDP + phosphate + H(+). Functionally, required for accurate and efficient protein synthesis under certain stress conditions. May act as a fidelity factor of the translation reaction, by catalyzing a one-codon backward translocation of tRNAs on improperly translocated ribosomes. Back-translocation proceeds from a post-translocation (POST) complex to a pre-translocation (PRE) complex, thus giving elongation factor G a second chance to translocate the tRNAs correctly. Binds to ribosomes in a GTP-dependent manner. This Neisseria gonorrhoeae (strain ATCC 700825 / FA 1090) protein is Elongation factor 4.